The sequence spans 166 residues: Mitochondrial inner membrane protease subunit 1 (166 aa).

Active-site residues include Ser40 and Lys83.

The protein belongs to the peptidase S26 family. IMP1 subfamily. As to quaternary structure, heterodimer of 2 subunits, IMMPL1 and IMMPL2.

Its subcellular location is the mitochondrion inner membrane. Its function is as follows. Catalyzes the removal of transit peptides required for the targeting of proteins from the mitochondrial matrix, across the inner membrane, into the inter-membrane space. Known to process the nuclear encoded protein DIABLO. This Mus musculus (Mouse) protein is Mitochondrial inner membrane protease subunit 1 (Immp1l).